The sequence spans 67 residues: ATP synthase F(0) complex subunit 8 (67 aa).

Residues 8-24 (TWSITIMSMIMTLFIVF) traverse the membrane as a helical segment. K54 bears the N6-acetyllysine; alternate mark. K54 carries the N6-succinyllysine; alternate modification. An N6-acetyllysine modification is found at K57.

It belongs to the ATPase protein 8 family. As to quaternary structure, component of the ATP synthase complex composed at least of ATP5F1A/subunit alpha, ATP5F1B/subunit beta, ATP5MC1/subunit c (homooctomer), MT-ATP6/subunit a, MT-ATP8/subunit 8, ATP5ME/subunit e, ATP5MF/subunit f, ATP5MG/subunit g, ATP5MK/subunit k, ATP5MJ/subunit j, ATP5F1C/subunit gamma, ATP5F1D/subunit delta, ATP5F1E/subunit epsilon, ATP5PF/subunit F6, ATP5PB/subunit b, ATP5PD/subunit d, ATP5PO/subunit OSCP. ATP synthase complex consists of a soluble F(1) head domain (subunits alpha(3) and beta(3)) - the catalytic core - and a membrane F(0) domain - the membrane proton channel (subunits c, a, 8, e, f, g, k and j). These two domains are linked by a central stalk (subunits gamma, delta, and epsilon) rotating inside the F1 region and a stationary peripheral stalk (subunits F6, b, d, and OSCP). Interacts with PRICKLE3.

It is found in the mitochondrion membrane. Its function is as follows. Subunit 8, of the mitochondrial membrane ATP synthase complex (F(1)F(0) ATP synthase or Complex V) that produces ATP from ADP in the presence of a proton gradient across the membrane which is generated by electron transport complexes of the respiratory chain. ATP synthase complex consist of a soluble F(1) head domain - the catalytic core - and a membrane F(1) domain - the membrane proton channel. These two domains are linked by a central stalk rotating inside the F(1) region and a stationary peripheral stalk. During catalysis, ATP synthesis in the catalytic domain of F(1) is coupled via a rotary mechanism of the central stalk subunits to proton translocation. In vivo, can only synthesize ATP although its ATP hydrolase activity can be activated artificially in vitro. Part of the complex F(0) domain. This is ATP synthase F(0) complex subunit 8 from Felis catus (Cat).